Reading from the N-terminus, the 275-residue chain is Putative carbamate hydrolase RutD (275 aa).

This sequence belongs to the AB hydrolase superfamily. Hydrolase RutD family.

It carries out the reaction carbamate + 2 H(+) = NH4(+) + CO2. Involved in pyrimidine catabolism. May facilitate the hydrolysis of carbamate, a reaction that can also occur spontaneously. This is Putative carbamate hydrolase RutD from Escherichia coli O6:H1 (strain CFT073 / ATCC 700928 / UPEC).